The primary structure comprises 199 residues: Charged multivesicular body protein 1B2 (199 aa).

Residues 15–47 are a coiled coil; the sequence is AKELNRNAKKCDKEEKAEKAKIKKAIQKGNTEV. The interaction with IST1 stretch occupies residues 132 to 156; it reads MEDTMSSTTTLTTPQNQVDMLLQEM. A disordered region spans residues 167 to 199; the sequence is ELPQGQTGSVGASVASTEQDELSQRLARLRDQV. The segment covering 170-183 has biased composition (polar residues); sequence QGQTGSVGASVAST. The interval 174-199 is interaction with SPAST; that stretch reads GSVGASVASTEQDELSQRLARLRDQV. Positions 177–199 form a coiled coil; it reads GASVASTEQDELSQRLARLRDQV. Positions 180–196 are interaction with VPS4A, MITD1 and STAMBP; that stretch reads VASTEQDELSQRLARLR. Residues 180-199 form an interaction with VTA1 region; the sequence is VASTEQDELSQRLARLRDQV. The interval 183 to 199 is interaction with VPS4B; that stretch reads TEQDELSQRLARLRDQV. Residues 186 to 196 carry the MIT-interacting motif motif; it reads DELSQRLARLR.

The protein belongs to the SNF7 family. Probable peripherally associated component of the endosomal sorting required for transport complex III (ESCRT-III). ESCRT-III components are thought to multimerize to form a flat lattice on the perimeter membrane of the endosome. Several assembly forms of ESCRT-III may exist that interact and act sequentially. Interacts with CHMP1A. Interacts with VTA1; the interaction probably involves the open conformation of CHMP1B. Interacts with CHMP2A. Interacts with VPS4A; the interaction is direct. Interacts with VPS4B; the interaction is direct. Interacts with SPAST (via MIT domain); the interaction is direct. Interacts with IST1. Interacts with MITD1. Interacts with STAMBP.

Its subcellular location is the cytoplasm. The protein resides in the cytosol. It localises to the endosome. It is found in the late endosome membrane. In terms of biological role, probable peripherally associated component of the endosomal sorting required for transport complex III (ESCRT-III) which is involved in multivesicular bodies (MVBs) formation and sorting of endosomal cargo proteins into MVBs. MVBs contain intraluminal vesicles (ILVs) that are generated by invagination and scission from the limiting membrane of the endosome and mostly are delivered to lysosomes enabling degradation of membrane proteins, such as stimulated growth factor receptors, lysosomal enzymes and lipids. The MVB pathway appears to require the sequential function of ESCRT-O, -I,-II and -III complexes. ESCRT-III proteins mostly dissociate from the invaginating membrane before the ILV is released. The ESCRT machinery also functions in topologically equivalent membrane fission events, such as the terminal stages of cytokinesis. ESCRT-III proteins are believed to mediate the necessary vesicle extrusion and/or membrane fission activities, possibly in conjunction with the AAA ATPase VPS4. Involved in cytokinesis. Involved in recruiting VPS4A and/or VPS4B and SPAST to the midbody of dividing cells. This chain is Charged multivesicular body protein 1B2, found in Mus musculus (Mouse).